Reading from the N-terminus, the 408-residue chain is Glucose-1-phosphate adenylyltransferase (408 aa).

Residues Tyr100, Gly165, 180-181 (EK), and Ser198 contribute to the alpha-D-glucose 1-phosphate site.

Belongs to the bacterial/plant glucose-1-phosphate adenylyltransferase family. As to quaternary structure, homotetramer.

It catalyses the reaction alpha-D-glucose 1-phosphate + ATP + H(+) = ADP-alpha-D-glucose + diphosphate. Its pathway is glycan biosynthesis; glycogen biosynthesis. Involved in the biosynthesis of ADP-glucose, a building block required for the elongation reactions to produce glycogen. Catalyzes the reaction between ATP and alpha-D-glucose 1-phosphate (G1P) to produce pyrophosphate and ADP-Glc. In Cutibacterium acnes (strain DSM 16379 / KPA171202) (Propionibacterium acnes), this protein is Glucose-1-phosphate adenylyltransferase.